Here is a 173-residue protein sequence, read N- to C-terminus: Endoribonuclease YbeY (173 aa).

The Zn(2+) site is built by His-126, His-130, and His-136.

The protein belongs to the endoribonuclease YbeY family. Requires Zn(2+) as cofactor.

It is found in the cytoplasm. Single strand-specific metallo-endoribonuclease involved in late-stage 70S ribosome quality control and in maturation of the 3' terminus of the 16S rRNA. The protein is Endoribonuclease YbeY of Sinorhizobium fredii (strain NBRC 101917 / NGR234).